A 106-amino-acid chain; its full sequence is ATP-dependent Clp protease adapter protein ClpS (106 aa).

This sequence belongs to the ClpS family. As to quaternary structure, binds to the N-terminal domain of the chaperone ClpA.

Functionally, involved in the modulation of the specificity of the ClpAP-mediated ATP-dependent protein degradation. This Vibrio campbellii (strain ATCC BAA-1116) protein is ATP-dependent Clp protease adapter protein ClpS.